The primary structure comprises 363 residues: Anhydro-N-acetylmuramic acid kinase (363 aa).

10 to 17 (GTSLDGLD) contacts ATP.

Belongs to the anhydro-N-acetylmuramic acid kinase family.

The enzyme catalyses 1,6-anhydro-N-acetyl-beta-muramate + ATP + H2O = N-acetyl-D-muramate 6-phosphate + ADP + H(+). It participates in amino-sugar metabolism; 1,6-anhydro-N-acetylmuramate degradation. The protein operates within cell wall biogenesis; peptidoglycan recycling. Functionally, catalyzes the specific phosphorylation of 1,6-anhydro-N-acetylmuramic acid (anhMurNAc) with the simultaneous cleavage of the 1,6-anhydro ring, generating MurNAc-6-P. Is required for the utilization of anhMurNAc either imported from the medium or derived from its own cell wall murein, and thus plays a role in cell wall recycling. Contributes to intrinsic fosfomycin resistance in P.putida. The polypeptide is Anhydro-N-acetylmuramic acid kinase (Pseudomonas putida (strain ATCC 47054 / DSM 6125 / CFBP 8728 / NCIMB 11950 / KT2440)).